We begin with the raw amino-acid sequence, 310 residues long: Probable manganese-dependent inorganic pyrophosphatase (310 aa).

Mn(2+)-binding residues include His-10, Asp-14, Asp-16, Asp-75, His-97, and Asp-149.

Belongs to the PPase class C family. Mn(2+) serves as cofactor.

It localises to the cytoplasm. It carries out the reaction diphosphate + H2O = 2 phosphate + H(+). This chain is Probable manganese-dependent inorganic pyrophosphatase, found in Clostridium acetobutylicum (strain ATCC 824 / DSM 792 / JCM 1419 / IAM 19013 / LMG 5710 / NBRC 13948 / NRRL B-527 / VKM B-1787 / 2291 / W).